The chain runs to 166 residues: Putative 4-hydroxy-4-methyl-2-oxoglutarate aldolase 2 (166 aa).

A2 is subject to N-acetylalanine. Residues 81–84 (GGNP) and R103 each bind substrate. D104 is a binding site for a divalent metal cation.

This sequence belongs to the class II aldolase/RraA-like family. Homotrimer. A divalent metal cation serves as cofactor.

The catalysed reaction is 4-hydroxy-4-methyl-2-oxoglutarate = 2 pyruvate. It carries out the reaction oxaloacetate + H(+) = pyruvate + CO2. Its function is as follows. Catalyzes the aldol cleavage of 4-hydroxy-4-methyl-2-oxoglutarate (HMG) into 2 molecules of pyruvate. Also contains a secondary oxaloacetate (OAA) decarboxylase activity due to the common pyruvate enolate transition state formed following C-C bond cleavage in the retro-aldol and decarboxylation reactions. In Arabidopsis thaliana (Mouse-ear cress), this protein is Putative 4-hydroxy-4-methyl-2-oxoglutarate aldolase 2.